The following is a 548-amino-acid chain: Glutamate--tRNA ligase (548 aa).

The 'HIGH' region signature appears at 102 to 112 (PSPSGPLHIGH).

This sequence belongs to the class-I aminoacyl-tRNA synthetase family. Glutamate--tRNA ligase type 2 subfamily.

The protein localises to the cytoplasm. The enzyme catalyses tRNA(Glu) + L-glutamate + ATP = L-glutamyl-tRNA(Glu) + AMP + diphosphate. Catalyzes the attachment of glutamate to tRNA(Glu) in a two-step reaction: glutamate is first activated by ATP to form Glu-AMP and then transferred to the acceptor end of tRNA(Glu). This Thermoplasma volcanium (strain ATCC 51530 / DSM 4299 / JCM 9571 / NBRC 15438 / GSS1) protein is Glutamate--tRNA ligase.